The following is a 284-amino-acid chain: 2,3,4,5-tetrahydropyridine-2,6-dicarboxylate N-succinyltransferase (284 aa).

Residues R111 and D148 each coordinate substrate.

This sequence belongs to the transferase hexapeptide repeat family. In terms of assembly, homotrimer.

The protein localises to the cytoplasm. It catalyses the reaction (S)-2,3,4,5-tetrahydrodipicolinate + succinyl-CoA + H2O = (S)-2-succinylamino-6-oxoheptanedioate + CoA. It participates in amino-acid biosynthesis; L-lysine biosynthesis via DAP pathway; LL-2,6-diaminopimelate from (S)-tetrahydrodipicolinate (succinylase route): step 1/3. The protein is 2,3,4,5-tetrahydropyridine-2,6-dicarboxylate N-succinyltransferase of Ehrlichia ruminantium (strain Gardel).